The sequence spans 733 residues: Phosphoribosylformylglycinamidine synthase subunit PurL (733 aa).

Histidine 42 is a catalytic residue. Tyrosine 45 and lysine 84 together coordinate ATP. Glutamate 86 lines the Mg(2+) pocket. Residues 87 to 90 (SHNH) and arginine 109 contribute to the substrate site. Histidine 88 acts as the Proton acceptor in catalysis. Mg(2+) is bound at residue aspartate 110. Glutamine 233 serves as a coordination point for substrate. Aspartate 261 is a Mg(2+) binding site. 305-307 (ESQ) lines the substrate pocket. Residues aspartate 489 and glycine 526 each contribute to the ATP site. Asparagine 527 lines the Mg(2+) pocket. Serine 529 lines the substrate pocket.

The protein belongs to the FGAMS family. As to quaternary structure, monomer. Part of the FGAM synthase complex composed of 1 PurL, 1 PurQ and 2 PurS subunits.

Its subcellular location is the cytoplasm. It catalyses the reaction N(2)-formyl-N(1)-(5-phospho-beta-D-ribosyl)glycinamide + L-glutamine + ATP + H2O = 2-formamido-N(1)-(5-O-phospho-beta-D-ribosyl)acetamidine + L-glutamate + ADP + phosphate + H(+). Its pathway is purine metabolism; IMP biosynthesis via de novo pathway; 5-amino-1-(5-phospho-D-ribosyl)imidazole from N(2)-formyl-N(1)-(5-phospho-D-ribosyl)glycinamide: step 1/2. Its function is as follows. Part of the phosphoribosylformylglycinamidine synthase complex involved in the purines biosynthetic pathway. Catalyzes the ATP-dependent conversion of formylglycinamide ribonucleotide (FGAR) and glutamine to yield formylglycinamidine ribonucleotide (FGAM) and glutamate. The FGAM synthase complex is composed of three subunits. PurQ produces an ammonia molecule by converting glutamine to glutamate. PurL transfers the ammonia molecule to FGAR to form FGAM in an ATP-dependent manner. PurS interacts with PurQ and PurL and is thought to assist in the transfer of the ammonia molecule from PurQ to PurL. This Moorella thermoacetica (strain ATCC 39073 / JCM 9320) protein is Phosphoribosylformylglycinamidine synthase subunit PurL.